The chain runs to 147 residues: Plasminogen receptor (KT) (147 aa).

Over 1-52 (MGFIFSKSMNENMKNQQEFMVMHARLQLERQLIMQNEMRERQMAMQIAWSRE) the chain is Extracellular. A helical membrane pass occupies residues 53-73 (FLKYFGTFFGIATISLAAGAI). At 74–78 (KRKKP) the chain is on the cytoplasmic side. The chain crosses the membrane as a helical span at residues 79–99 (AFLIPIVPLSFIFTYQYDLGY). Residues 100-147 (GTLLQRMKSEAEDILETEKTKLELPKGLITFESLEKARREQSKFFSDK) are Extracellular-facing.

Interacts with PLAT. Interacts with PLAUR. As to expression, expressed in adrenal medulla (pheochromocytoma).

The protein localises to the cell membrane. Its function is as follows. Receptor for plasminogen. Regulates urokinase plasminogen activator-dependent and stimulates tissue-type plasminogen activator-dependent cell surface plasminogen activation. Proposed to be part of a local catecholaminergic cell plasminogen activation system that regulates neuroendocrine prohormone processing. Involved in regulation of inflammatory response; regulates monocyte chemotactic migration and matrix metalloproteinase activation, such as of MMP2 and MMP9. This is Plasminogen receptor (KT) (Plgrkt) from Rattus norvegicus (Rat).